The sequence spans 424 residues: UDP-N-acetylglucosamine 1-carboxyvinyltransferase (424 aa).

Phosphoenolpyruvate is bound at residue 22–23 (KN). Arg-93 contributes to the UDP-N-acetyl-alpha-D-glucosamine binding site. Cys-117 serves as the catalytic Proton donor. Position 117 is a 2-(S-cysteinyl)pyruvic acid O-phosphothioketal (Cys-117). Residues 122-126 (RPVDL), Asp-307, and Ile-329 contribute to the UDP-N-acetyl-alpha-D-glucosamine site.

Belongs to the EPSP synthase family. MurA subfamily.

The protein localises to the cytoplasm. It catalyses the reaction phosphoenolpyruvate + UDP-N-acetyl-alpha-D-glucosamine = UDP-N-acetyl-3-O-(1-carboxyvinyl)-alpha-D-glucosamine + phosphate. Its pathway is cell wall biogenesis; peptidoglycan biosynthesis. Functionally, cell wall formation. Adds enolpyruvyl to UDP-N-acetylglucosamine. This Chlorobaculum parvum (strain DSM 263 / NCIMB 8327) (Chlorobium vibrioforme subsp. thiosulfatophilum) protein is UDP-N-acetylglucosamine 1-carboxyvinyltransferase.